Reading from the N-terminus, the 153-residue chain is Endoribonuclease YbeY (153 aa).

Zn(2+)-binding residues include His-114, His-118, and His-124.

The protein belongs to the endoribonuclease YbeY family. Zn(2+) serves as cofactor.

Its subcellular location is the cytoplasm. Its function is as follows. Single strand-specific metallo-endoribonuclease involved in late-stage 70S ribosome quality control and in maturation of the 3' terminus of the 16S rRNA. This is Endoribonuclease YbeY from Shewanella sp. (strain MR-4).